The sequence spans 647 residues: DNA polymerase subunit gamma-1 (647 aa).

The interval 116–147 (ERPGRAEQSQMQDEDGLPELVEESSQPSFHHG) is disordered. Acidic residues predominate over residues 127-137 (QDEDGLPELVE).

The protein belongs to the DNA polymerase type-A family. Heterotrimer composed of a catalytic subunit and a homodimer of accessory subunits. Interacts with TTC3. Mg(2+) is required as a cofactor.

It is found in the mitochondrion. Its subcellular location is the mitochondrion matrix. The protein resides in the mitochondrion nucleoid. It carries out the reaction DNA(n) + a 2'-deoxyribonucleoside 5'-triphosphate = DNA(n+1) + diphosphate. Its function is as follows. Involved in the replication of mitochondrial DNA. Associates with mitochondrial DNA. The sequence is that of DNA polymerase subunit gamma-1 (POLG) from Gallus gallus (Chicken).